The chain runs to 412 residues: F-box/WD repeat-containing protein 4 (412 aa).

Residues 25–71 (GPALWRLPEELLLLICSYLDMRALGRLAQVCRWLRRFTSCDLLWRRI) enclose the F-box domain. WD repeat units follow at residues 154 to 190 (RPLG…IHKI), 193 to 229 (TFTV…VWPL), 236 to 277 (QCLH…IWDL), 283 to 321 (MTHL…YWDL), 327 to 366 (KCVM…LWDR), and 373 to 409 (HAFP…VLDF).

In terms of assembly, part of a SCF (SKP1-cullin-F-box) protein ligase complex. Interacts with POUF51. Expressed in brain, kidney, lung and liver.

In terms of biological role, probably recognizes and binds to some phosphorylated proteins and promotes their ubiquitination and degradation. Likely to be involved in key signaling pathways crucial for normal limb development. May participate in Wnt signaling. The sequence is that of F-box/WD repeat-containing protein 4 (FBXW4) from Homo sapiens (Human).